Here is a 177-residue protein sequence, read N- to C-terminus: Thymidine kinase (177 aa).

Residue 11–18 participates in ATP binding; it reads GPMFSGKS. Glu83 serves as the catalytic Proton acceptor. Phe113 lines the substrate pocket. 2 residues coordinate Zn(2+): Cys138 and Cys141. Position 157–161 (157–161) interacts with substrate; that stretch reads IEIIG. The Zn(2+) site is built by Cys170 and Cys173.

This sequence belongs to the thymidine kinase family. In terms of assembly, homotetramer. Two molecules of substrate bind to each enzyme tetramer.

It carries out the reaction thymidine + ATP = dTMP + ADP + H(+). In terms of biological role, phosphorylates thymidine and thymidine analogs, such as azidothymidine (AZT). Part of the salvage pathway for pyrimidine deoxyribonucleotide synthesis. This Vaccinia virus (strain Copenhagen) (VACV) protein is Thymidine kinase (OPG101).